Consider the following 432-residue polypeptide: uncharacterized protein (432 aa).

The span at 1-14 shows a compositional bias: polar residues; it reads MSDTTDVPENQKSP. The segment at 1–42 is disordered; it reads MSDTTDVPENQKSPKPSGKADKRKIEEKPENSSLKRKKFEDP. Residues 18–30 show a composition bias toward basic and acidic residues; it reads GKADKRKIEEKPE. Residues 85–148 form the S4 RNA-binding domain; the sequence is RKMVEVFSGE…HEHPIRDLPI (64 aa). Asp-199 is an active-site residue.

It belongs to the pseudouridine synthase RluA family.

This is an uncharacterized protein from Caenorhabditis elegans.